We begin with the raw amino-acid sequence, 352 residues long: Histidinol-phosphate aminotransferase 1 (352 aa).

Lys211 is subject to N6-(pyridoxal phosphate)lysine.

The protein belongs to the class-II pyridoxal-phosphate-dependent aminotransferase family. Histidinol-phosphate aminotransferase subfamily. In terms of assembly, homodimer. Requires pyridoxal 5'-phosphate as cofactor.

The catalysed reaction is L-histidinol phosphate + 2-oxoglutarate = 3-(imidazol-4-yl)-2-oxopropyl phosphate + L-glutamate. The protein operates within amino-acid biosynthesis; L-histidine biosynthesis; L-histidine from 5-phospho-alpha-D-ribose 1-diphosphate: step 7/9. This chain is Histidinol-phosphate aminotransferase 1, found in Haemophilus influenzae (strain 86-028NP).